Reading from the N-terminus, the 110-residue chain is Inner membrane protein H108R (110 aa).

Residues 10–32 (LIVIITILITTRELSTTMLIVSL) traverse the membrane as a helical segment.

It belongs to the asfivirus H108R family.

The protein localises to the virion membrane. In African swine fever virus (isolate Pig/Kenya/KEN-50/1950) (ASFV), this protein is Inner membrane protein H108R.